The primary structure comprises 374 residues: N5-carboxyaminoimidazole ribonucleotide synthase (374 aa).

Residues Arg108, Lys148, Gly153 to Gln159, Glu183 to Leu186, Glu191, His214, and Asn266 to Glu267 contribute to the ATP site. The 185-residue stretch at Lys112–Thr296 folds into the ATP-grasp domain.

It belongs to the PurK/PurT family. In terms of assembly, homodimer.

It carries out the reaction 5-amino-1-(5-phospho-beta-D-ribosyl)imidazole + hydrogencarbonate + ATP = 5-carboxyamino-1-(5-phospho-D-ribosyl)imidazole + ADP + phosphate + 2 H(+). Its pathway is purine metabolism; IMP biosynthesis via de novo pathway; 5-amino-1-(5-phospho-D-ribosyl)imidazole-4-carboxylate from 5-amino-1-(5-phospho-D-ribosyl)imidazole (N5-CAIR route): step 1/2. Catalyzes the ATP-dependent conversion of 5-aminoimidazole ribonucleotide (AIR) and HCO(3)(-) to N5-carboxyaminoimidazole ribonucleotide (N5-CAIR). This is N5-carboxyaminoimidazole ribonucleotide synthase from Staphylococcus aureus (strain COL).